We begin with the raw amino-acid sequence, 418 residues long: Pyrophosphate--fructose 6-phosphate 1-phosphotransferase (418 aa).

Position 13 (glycine 13) interacts with diphosphate. Asparagine 111 contributes to the Mg(2+) binding site. Residues threonine 139 to aspartate 141, methionine 187 to arginine 189, glutamate 244, and tyrosine 295 to arginine 298 each bind substrate. Aspartate 141 acts as the Proton acceptor in catalysis.

It belongs to the phosphofructokinase type A (PFKA) family. PPi-dependent PFK group II subfamily. Clade 'B2' sub-subfamily. Homodimer. Mg(2+) serves as cofactor.

Its subcellular location is the cytoplasm. It carries out the reaction beta-D-fructose 6-phosphate + diphosphate = beta-D-fructose 1,6-bisphosphate + phosphate + H(+). The protein operates within carbohydrate degradation; glycolysis; D-glyceraldehyde 3-phosphate and glycerone phosphate from D-glucose: step 3/4. Non-allosteric. Functionally, catalyzes the phosphorylation of D-fructose 6-phosphate, the first committing step of glycolysis. Uses inorganic phosphate (PPi) as phosphoryl donor instead of ATP like common ATP-dependent phosphofructokinases (ATP-PFKs), which renders the reaction reversible, and can thus function both in glycolysis and gluconeogenesis. Consistently, PPi-PFK can replace the enzymes of both the forward (ATP-PFK) and reverse (fructose-bisphosphatase (FBPase)) reactions. The polypeptide is Pyrophosphate--fructose 6-phosphate 1-phosphotransferase (Xanthomonas campestris pv. campestris (strain B100)).